Reading from the N-terminus, the 440-residue chain is GTPase Der (440 aa).

EngA-type G domains follow at residues 4–168 (PVVA…PPEK) and 177–352 (IKIA…GRHS). GTP contacts are provided by residues 10 to 17 (GRPNVGKS), 57 to 61 (DTGGL), 120 to 123 (NKVE), 183 to 190 (GRPNVGKS), 230 to 234 (DTAGM), and 295 to 298 (NKWD). Residues 353-437 (MRISTPGLNA…PIRFVLRKKT (85 aa)) enclose the KH-like domain.

Belongs to the TRAFAC class TrmE-Era-EngA-EngB-Septin-like GTPase superfamily. EngA (Der) GTPase family. Associates with the 50S ribosomal subunit.

Functionally, GTPase that plays an essential role in the late steps of ribosome biogenesis. The protein is GTPase Der of Pelotomaculum thermopropionicum (strain DSM 13744 / JCM 10971 / SI).